The primary structure comprises 462 residues: Prenyltransferase phqI (462 aa).

Brevianamide F is bound at residue E101. The dimethylallyl diphosphate site is built by R117, K204, Y206, K273, Y275, Y357, Y442, and Y446.

It belongs to the tryptophan dimethylallyltransferase family.

The protein operates within alkaloid biosynthesis. Functionally, prenyltransferase; part of the gene cluster that mediates the biosynthesis of paraherquamide, a fungal indole alkaloid that belongs to a family of natural products containing a characteristic bicyclo[2.2.2]diazaoctane core. The first steps in the biosynthesis of paraherquamide is the production of the beta-methyl-proline precursor from L-isoleucine. They require oxidation of a terminally hydroxylated L-isoleucine to the corresponding aldehyde by enzymes which have still to be identified. Spontaneous cyclization and dehydration would yield the 4-methyl pyrolline-5-carboxylic acid, which is then reduced by the pyrroline-5-carboxylate reductase phqD leading to the beta-methyl-proline precursor. The next step of paraherquamide biosynthesis involves coupling of beta-methyl-proline and L-tryptophan by the bimodular NRPS phqB, to produce a monooxopiperazine intermediate. The reductase (R) domain of phqB utilizes NADPH for hydride transfer to reduce the thioester bond of the T domain-tethered linear dipeptide to a hemithioaminal intermediate, which spontaneously cleaves the C-S bond to release the aldehyde product. This compound undergoes spontaneous cyclization and dehydration to give a dienamine which is reverse prenylated at C-2 by the reverse prenyltransferase phqJ. The other prenyltransferase present in the cluster, phqI may be a redundant gene in the pathway. During biosynthetic assembly, the key step to produce the polycyclic core is catalyzed by the bifunctional reductase and intramolecular [4+2] Diels-Alderase, phqE, resulting in formation of the [2.2.2] diazaoctane intermediate preparaherquamide. Following formation of preparaherquamide, an indole 2,3-epoxidation-initiated pinacol-like rearrangement is catalyzed by the phqK FAD-dependent monooxygenase. The prenyltransferase phqA, the cytochrome P450 monooxygenase phqL, and the FAD-linked oxidoreductase phqH (or the cytochrome P450 monooxygenase phqM), are proposed to be involved in the formation of the pyran ring. The FAD-dependent monooxygenase phqK is likely responsible for generation of the spiro-oxindole, and the N-methylation is likely mediated by the phqN methyltransferase leading to the isolable natural product paraherquamide F. However, the order of these biosynthetic steps has still to be determined. In late-stage paraherquamide biosynthesis, the third P450 monooxygenase, phqO, is probably responsible for the C-14 hydroxylation, transforming paraherquamide F to paraherquamide G, and paraherquamide E to the final product paraherquamide A. The expansion from the 6-membered ring pyran (in paraherquamides F and G) to the 7-membered dioxepin ring (in paraherquamides A and E) represents a poorly understood but intriguing process that probably involves the 2-oxoglutarate-dependent dioxygenase phqC. Finally, the remaining members of the paraherquamide cluster, including phqI as well as phqM (or phqH), do not have a clearly prescribed role and appear to be redundant. In Penicillium fellutanum, this protein is Prenyltransferase phqI.